A 91-amino-acid polypeptide reads, in one-letter code: Small ribosomal subunit protein uS19 (91 aa).

Belongs to the universal ribosomal protein uS19 family.

Protein S19 forms a complex with S13 that binds strongly to the 16S ribosomal RNA. The chain is Small ribosomal subunit protein uS19 from Methylacidiphilum infernorum (isolate V4) (Methylokorus infernorum (strain V4)).